Consider the following 654-residue polypeptide: Fructose-1,6-bisphosphatase class 3 (654 aa).

The interval 288–307 is disordered; it reads NPAFKPKKRPDKHERLTQRE. Basic and acidic residues predominate over residues 298 to 307; sequence DKHERLTQRE.

The protein belongs to the FBPase class 3 family. Mn(2+) serves as cofactor.

The catalysed reaction is beta-D-fructose 1,6-bisphosphate + H2O = beta-D-fructose 6-phosphate + phosphate. It functions in the pathway carbohydrate biosynthesis; gluconeogenesis. This is Fructose-1,6-bisphosphatase class 3 from Staphylococcus aureus (strain MRSA252).